Here is a 432-residue protein sequence, read N- to C-terminus: Trigger factor (432 aa).

The PPIase FKBP-type domain occupies 161–246 (GKRVSIDFVG…VNKVEARQLP (86 aa)).

Belongs to the FKBP-type PPIase family. Tig subfamily.

The protein localises to the cytoplasm. It catalyses the reaction [protein]-peptidylproline (omega=180) = [protein]-peptidylproline (omega=0). Its function is as follows. Involved in protein export. Acts as a chaperone by maintaining the newly synthesized protein in an open conformation. Functions as a peptidyl-prolyl cis-trans isomerase. The polypeptide is Trigger factor (Vibrio vulnificus (strain CMCP6)).